The following is a 373-amino-acid chain: PqqA peptide cyclase (373 aa).

Positions 9–224 (LTKPRWLLAE…QSYKEKVKGR (216 aa)) constitute a Radical SAM core domain. Positions 23, 27, and 30 each coordinate [4Fe-4S] cluster.

Belongs to the radical SAM superfamily. PqqE family. As to quaternary structure, interacts with PqqD. The interaction is necessary for activity of PqqE. Requires [4Fe-4S] cluster as cofactor.

It catalyses the reaction [PQQ precursor protein] + S-adenosyl-L-methionine = E-Y cross-linked-[PQQ precursor protein] + 5'-deoxyadenosine + L-methionine + H(+). It functions in the pathway cofactor biosynthesis; pyrroloquinoline quinone biosynthesis. Functionally, catalyzes the cross-linking of a glutamate residue and a tyrosine residue in the PqqA protein as part of the biosynthesis of pyrroloquinoline quinone (PQQ). In Methylococcus capsulatus (strain ATCC 33009 / NCIMB 11132 / Bath), this protein is PqqA peptide cyclase.